A 140-amino-acid chain; its full sequence is Large-conductance mechanosensitive channel (140 aa).

A run of 3 helical transmembrane segments spans residues 14 to 34 (VLDLAVGVIIGGAFTSIVKSL), 37 to 57 (YLINPLIGLFIGGIDFSDWVL), and 66 to 86 (FGSFINAVINFLIIAFVVFIL).

This sequence belongs to the MscL family. As to quaternary structure, homopentamer.

Its subcellular location is the cell membrane. Channel that opens in response to stretch forces in the membrane lipid bilayer. May participate in the regulation of osmotic pressure changes within the cell. The chain is Large-conductance mechanosensitive channel from Pediococcus pentosaceus (strain ATCC 25745 / CCUG 21536 / LMG 10740 / 183-1w).